The sequence spans 159 residues: Ribosomal RNA large subunit methyltransferase H (159 aa).

Residues leucine 76, glycine 108, and 127-132 (FGLLTL) contribute to the S-adenosyl-L-methionine site.

The protein belongs to the RNA methyltransferase RlmH family. In terms of assembly, homodimer.

The protein resides in the cytoplasm. The enzyme catalyses pseudouridine(1915) in 23S rRNA + S-adenosyl-L-methionine = N(3)-methylpseudouridine(1915) in 23S rRNA + S-adenosyl-L-homocysteine + H(+). Its function is as follows. Specifically methylates the pseudouridine at position 1915 (m3Psi1915) in 23S rRNA. This chain is Ribosomal RNA large subunit methyltransferase H, found in Streptococcus pyogenes serotype M6 (strain ATCC BAA-946 / MGAS10394).